The following is a 455-amino-acid chain: Bifunctional protein GlmU (455 aa).

Positions 1–226 (MSLDIVILAA…AMEVQGANDR (226 aa)) are pyrophosphorylase. UDP-N-acetyl-alpha-D-glucosamine contacts are provided by residues 8 to 11 (LAAG), K22, Q73, 78 to 79 (GT), 99 to 101 (YGD), G136, E151, N166, and N224. Mg(2+) is bound at residue D101. N224 contacts Mg(2+). The linker stretch occupies residues 227-247 (KQLSELERHYQLREARRLMAA). The tract at residues 248–455 (GVTLRDPSRF…WKRPVKITKD (208 aa)) is N-acetyltransferase. Residues R330 and K348 each coordinate UDP-N-acetyl-alpha-D-glucosamine. H360 (proton acceptor) is an active-site residue. UDP-N-acetyl-alpha-D-glucosamine is bound by residues Y363 and N374. Acetyl-CoA is bound by residues A377, 383–384 (NY), S402, A420, and R437.

This sequence in the N-terminal section; belongs to the N-acetylglucosamine-1-phosphate uridyltransferase family. It in the C-terminal section; belongs to the transferase hexapeptide repeat family. In terms of assembly, homotrimer. Mg(2+) serves as cofactor.

Its subcellular location is the cytoplasm. It carries out the reaction alpha-D-glucosamine 1-phosphate + acetyl-CoA = N-acetyl-alpha-D-glucosamine 1-phosphate + CoA + H(+). The enzyme catalyses N-acetyl-alpha-D-glucosamine 1-phosphate + UTP + H(+) = UDP-N-acetyl-alpha-D-glucosamine + diphosphate. The protein operates within nucleotide-sugar biosynthesis; UDP-N-acetyl-alpha-D-glucosamine biosynthesis; N-acetyl-alpha-D-glucosamine 1-phosphate from alpha-D-glucosamine 6-phosphate (route II): step 2/2. Its pathway is nucleotide-sugar biosynthesis; UDP-N-acetyl-alpha-D-glucosamine biosynthesis; UDP-N-acetyl-alpha-D-glucosamine from N-acetyl-alpha-D-glucosamine 1-phosphate: step 1/1. It functions in the pathway bacterial outer membrane biogenesis; LPS lipid A biosynthesis. Functionally, catalyzes the last two sequential reactions in the de novo biosynthetic pathway for UDP-N-acetylglucosamine (UDP-GlcNAc). The C-terminal domain catalyzes the transfer of acetyl group from acetyl coenzyme A to glucosamine-1-phosphate (GlcN-1-P) to produce N-acetylglucosamine-1-phosphate (GlcNAc-1-P), which is converted into UDP-GlcNAc by the transfer of uridine 5-monophosphate (from uridine 5-triphosphate), a reaction catalyzed by the N-terminal domain. The chain is Bifunctional protein GlmU from Pseudomonas syringae pv. tomato (strain ATCC BAA-871 / DC3000).